Consider the following 80-residue polypeptide: Large ribosomal subunit protein uL29 (80 aa).

Belongs to the universal ribosomal protein uL29 family.

The polypeptide is Large ribosomal subunit protein uL29 (rpmC) (Mycobacterium leprae (strain TN)).